We begin with the raw amino-acid sequence, 309 residues long: Aspartate carbamoyltransferase catalytic subunit (309 aa).

2 residues coordinate carbamoyl phosphate: Arg55 and Thr56. Lys85 contacts L-aspartate. 3 residues coordinate carbamoyl phosphate: Arg106, His135, and Gln138. L-aspartate is bound by residues Arg168 and Arg230. Residues Leu268 and Pro269 each coordinate carbamoyl phosphate.

It belongs to the aspartate/ornithine carbamoyltransferase superfamily. ATCase family. In terms of assembly, heterododecamer (2C3:3R2) of six catalytic PyrB chains organized as two trimers (C3), and six regulatory PyrI chains organized as three dimers (R2).

The enzyme catalyses carbamoyl phosphate + L-aspartate = N-carbamoyl-L-aspartate + phosphate + H(+). Its pathway is pyrimidine metabolism; UMP biosynthesis via de novo pathway; (S)-dihydroorotate from bicarbonate: step 2/3. Catalyzes the condensation of carbamoyl phosphate and aspartate to form carbamoyl aspartate and inorganic phosphate, the committed step in the de novo pyrimidine nucleotide biosynthesis pathway. In Aliivibrio fischeri (strain ATCC 700601 / ES114) (Vibrio fischeri), this protein is Aspartate carbamoyltransferase catalytic subunit.